A 125-amino-acid polypeptide reads, in one-letter code: Large ribosomal subunit protein bL12 (125 aa).

The protein belongs to the bacterial ribosomal protein bL12 family. In terms of assembly, homodimer. Part of the ribosomal stalk of the 50S ribosomal subunit. Forms a multimeric L10(L12)X complex, where L10 forms an elongated spine to which 2 to 4 L12 dimers bind in a sequential fashion. Binds GTP-bound translation factors.

In terms of biological role, forms part of the ribosomal stalk which helps the ribosome interact with GTP-bound translation factors. Is thus essential for accurate translation. This chain is Large ribosomal subunit protein bL12, found in Ruthia magnifica subsp. Calyptogena magnifica.